A 391-amino-acid chain; its full sequence is Histidinol-phosphate aminotransferase (391 aa).

The residue at position 246 (lysine 246) is an N6-(pyridoxal phosphate)lysine.

The protein belongs to the class-II pyridoxal-phosphate-dependent aminotransferase family. Histidinol-phosphate aminotransferase subfamily. Pyridoxal 5'-phosphate serves as cofactor.

It catalyses the reaction L-histidinol phosphate + 2-oxoglutarate = 3-(imidazol-4-yl)-2-oxopropyl phosphate + L-glutamate. It functions in the pathway amino-acid biosynthesis; L-histidine biosynthesis; L-histidine from 5-phospho-alpha-D-ribose 1-diphosphate: step 7/9. This Methanopyrus kandleri (strain AV19 / DSM 6324 / JCM 9639 / NBRC 100938) protein is Histidinol-phosphate aminotransferase.